A 93-amino-acid polypeptide reads, in one-letter code: DNA-binding protein HU 1 (93 aa).

Belongs to the bacterial histone-like protein family. In terms of assembly, homodimer.

The protein localises to the cytoplasm. It localises to the nucleoid. In terms of biological role, histone-like DNA-binding protein which is capable of wrapping DNA to stabilize it, and thus to prevent its denaturation under extreme environmental conditions. The protein is DNA-binding protein HU 1 (hup1) of Streptomyces coelicolor (strain ATCC BAA-471 / A3(2) / M145).